Here is a 540-residue protein sequence, read N- to C-terminus: Glucose-6-phosphate isomerase (540 aa).

Glu-350 serves as the catalytic Proton donor. Active-site residues include His-381 and Lys-503.

This sequence belongs to the GPI family.

It localises to the cytoplasm. The enzyme catalyses alpha-D-glucose 6-phosphate = beta-D-fructose 6-phosphate. Its pathway is carbohydrate biosynthesis; gluconeogenesis. It functions in the pathway carbohydrate degradation; glycolysis; D-glyceraldehyde 3-phosphate and glycerone phosphate from D-glucose: step 2/4. Functionally, catalyzes the reversible isomerization of glucose-6-phosphate to fructose-6-phosphate. In Burkholderia ambifaria (strain MC40-6), this protein is Glucose-6-phosphate isomerase.